A 196-amino-acid polypeptide reads, in one-letter code: Peptidyl-tRNA hydrolase (196 aa).

Tyr-19 contacts tRNA. His-24 functions as the Proton acceptor in the catalytic mechanism. TRNA contacts are provided by Tyr-68, Asn-70, and Asn-116.

Belongs to the PTH family. As to quaternary structure, monomer.

The protein resides in the cytoplasm. The enzyme catalyses an N-acyl-L-alpha-aminoacyl-tRNA + H2O = an N-acyl-L-amino acid + a tRNA + H(+). Hydrolyzes ribosome-free peptidyl-tRNAs (with 1 or more amino acids incorporated), which drop off the ribosome during protein synthesis, or as a result of ribosome stalling. Its function is as follows. Catalyzes the release of premature peptidyl moieties from peptidyl-tRNA molecules trapped in stalled 50S ribosomal subunits, and thus maintains levels of free tRNAs and 50S ribosomes. This chain is Peptidyl-tRNA hydrolase, found in Aromatoleum aromaticum (strain DSM 19018 / LMG 30748 / EbN1) (Azoarcus sp. (strain EbN1)).